We begin with the raw amino-acid sequence, 84 residues long: Beta/gamma-crystallin (84 aa).

Beta/gamma crystallin 'Greek key' domains are found at residues 2–42 (GKII…IVES) and 43–84 (GTWF…VKQQ). The interval 64-84 (KYPNPGSWGGNDDELSSVKQQ) is disordered.

The protein belongs to the beta/gamma-crystallin family. In terms of assembly, monomer. As to expression, palps of larvae and otolith of the light-sensing ocellus.

In terms of biological role, structural component of the neuroectodermal visual system. This is Beta/gamma-crystallin from Ciona intestinalis (Transparent sea squirt).